The following is a 229-amino-acid chain: 2-C-methyl-D-erythritol 4-phosphate cytidylyltransferase (229 aa).

This sequence belongs to the IspD/TarI cytidylyltransferase family. IspD subfamily.

The enzyme catalyses 2-C-methyl-D-erythritol 4-phosphate + CTP + H(+) = 4-CDP-2-C-methyl-D-erythritol + diphosphate. It functions in the pathway isoprenoid biosynthesis; isopentenyl diphosphate biosynthesis via DXP pathway; isopentenyl diphosphate from 1-deoxy-D-xylulose 5-phosphate: step 2/6. Functionally, catalyzes the formation of 4-diphosphocytidyl-2-C-methyl-D-erythritol from CTP and 2-C-methyl-D-erythritol 4-phosphate (MEP). The sequence is that of 2-C-methyl-D-erythritol 4-phosphate cytidylyltransferase from Clostridium botulinum (strain 657 / Type Ba4).